The following is a 201-amino-acid chain: Interferon-induced transmembrane protein 10 (201 aa).

Disordered stretches follow at residues 1-23 and 60-88; these read MAQGPSQCPALLGAPASTTDGTQ and AAPAPEPSASPPMAPTLFPMESKSSKTDS. Topologically, residues 1–127 are extracellular; that stretch reads MAQGPSQCPA…PDTTEVNDYY (127 aa). Over residues 63–73 the composition is skewed to pro residues; the sequence is APEPSASPPMA. Residues 128 to 148 traverse the membrane as a helical segment; the sequence is LWSIFNFVYLNFCCLGFIALA. S-palmitoyl cysteine attachment occurs at residues Cys-140 and Cys-141. Topologically, residues 149–173 are cytoplasmic; the sequence is YSLKVRDKKLLNDLNGAVEDAKTAR. A helical membrane pass occupies residues 174–194; the sequence is LFNITSSALAASCIILIFIFL. Residues 195–201 are Extracellular-facing; it reads RYPLTDY.

It belongs to the CD225/Dispanin family.

The protein resides in the cell membrane. The chain is Interferon-induced transmembrane protein 10 (Ifitm10) from Mus musculus (Mouse).